The primary structure comprises 209 residues: MSKVFVIDHPLIQHKLTLIRDKNTGSKDFRDLVKEISLLMGYEVTRNLSLQEIEIETPVGVTKSKVISGRKLGIVPILRAGLGMVDGILQLIPAAKVGHVGLYRDPETLEPVEYYCKLPVDVQEREIIVLDPMLATGGSANATLKAIKDRGVANMKLVCIVSCPEGIAAVQKAHPDVDIYVAAIDEKLNDHAYIVPGLGDAGDRLFGTK.

Residues arginine 79, arginine 104, and aspartate 131–serine 139 each bind 5-phospho-alpha-D-ribose 1-diphosphate. Uracil contacts are provided by residues isoleucine 194 and glycine 199–alanine 201. Residue aspartate 200 participates in 5-phospho-alpha-D-ribose 1-diphosphate binding.

This sequence belongs to the UPRTase family. Mg(2+) is required as a cofactor.

It catalyses the reaction UMP + diphosphate = 5-phospho-alpha-D-ribose 1-diphosphate + uracil. Its pathway is pyrimidine metabolism; UMP biosynthesis via salvage pathway; UMP from uracil: step 1/1. Allosterically activated by GTP. In terms of biological role, catalyzes the conversion of uracil and 5-phospho-alpha-D-ribose 1-diphosphate (PRPP) to UMP and diphosphate. In Alkaliphilus metalliredigens (strain QYMF), this protein is Uracil phosphoribosyltransferase.